Consider the following 228-residue polypeptide: Cytidylate kinase (228 aa).

11–19 (GPAGTGKSS) provides a ligand contact to ATP.

This sequence belongs to the cytidylate kinase family. Type 1 subfamily.

It is found in the cytoplasm. It carries out the reaction CMP + ATP = CDP + ADP. The catalysed reaction is dCMP + ATP = dCDP + ADP. This is Cytidylate kinase from Mycolicibacterium paratuberculosis (strain ATCC BAA-968 / K-10) (Mycobacterium paratuberculosis).